Here is a 261-residue protein sequence, read N- to C-terminus: Ethanolamine ammonia-lyase small subunit (261 aa).

Adenosylcob(III)alamin is bound by residues valine 158, glutamate 179, and cysteine 208.

It belongs to the EutC family. In terms of assembly, the basic unit is a heterodimer which dimerizes to form tetramers. The heterotetramers trimerize; 6 large subunits form a core ring with 6 small subunits projecting outwards. Requires adenosylcob(III)alamin as cofactor.

The protein localises to the bacterial microcompartment. It carries out the reaction ethanolamine = acetaldehyde + NH4(+). It functions in the pathway amine and polyamine degradation; ethanolamine degradation. Catalyzes the deamination of various vicinal amino-alcohols to oxo compounds. Allows this organism to utilize ethanolamine as the sole source of nitrogen and carbon in the presence of external vitamin B12. In Bradyrhizobium diazoefficiens (strain JCM 10833 / BCRC 13528 / IAM 13628 / NBRC 14792 / USDA 110), this protein is Ethanolamine ammonia-lyase small subunit.